The primary structure comprises 113 residues: Large ribosomal subunit protein uL24 (113 aa).

The protein belongs to the universal ribosomal protein uL24 family. Part of the 50S ribosomal subunit.

In terms of biological role, one of two assembly initiator proteins, it binds directly to the 5'-end of the 23S rRNA, where it nucleates assembly of the 50S subunit. One of the proteins that surrounds the polypeptide exit tunnel on the outside of the subunit. The protein is Large ribosomal subunit protein uL24 of Rickettsia typhi (strain ATCC VR-144 / Wilmington).